The primary structure comprises 330 residues: RNA polymerase II transcription factor B subunit 3 (330 aa).

The RING-type zinc-finger motif lies at 23 to 68 (CPICKTDRYLSPDVRFLVNPECYHKICESCVDRIFSLGPAPCPYKS).

The protein localises to the nucleus. Its function is as follows. Acts as a component of the general transcription and DNA repair factor IIH (TFIIH or factor B), which is essential for both basal and activated transcription, and is involved in nucleotide excision repair (NER) of damaged DNA. TFIIH as CTD kinase activity and DNA-dependent ATPase activity, and is essential for polymerase II transcription. This Candida glabrata (strain ATCC 2001 / BCRC 20586 / JCM 3761 / NBRC 0622 / NRRL Y-65 / CBS 138) (Yeast) protein is RNA polymerase II transcription factor B subunit 3 (TFB3).